The following is a 323-amino-acid chain: MNSKCHCVILNDGNFIPVLGFGTALPLECPKSKAKELTKIAIDAGFHHFDSASVYNTEDHVGEAIRSKIADGTVRREDIFYTSKVWCTSLHPELVRASLERSLQKLQFDYVDLYLIHYPMALKPGEENFPVDEHGKLIFDRVDLCATWEAMEKCKDAGLTKSIGVSNFNYRQLEMILNKPGLKYKPVCNQVECHPYLNQMKLLDFCKSKDIVLVAYGVLGTQRYGGWVDQNSPVLLDEPVLGSMAKKYNRTPALIALRYQLQRGIVVLNTSLKEERIKENMQVFEFQLSSEDMKVLDGLNRNMRYIPAAIFKGHPNWPFLDEY.

20 to 24 (GFGTA) is an NADP(+) binding site. Residue Lys-31 participates in substrate binding. Asp-50 is an NADP(+) binding site. Tyr-55 functions as the Proton donor in the catalytic mechanism. Residue His-117 participates in substrate binding. Residues 166–167 (SN), Gln-190, 216–224 (YGVLGTQRY), and 270–280 (TSLKEERIKEN) contribute to the NADP(+) site.

The protein belongs to the aldo/keto reductase family. In terms of assembly, monomer. Detected in kidney and brain.

It is found in the cytoplasm. It carries out the reaction androsterone + NADP(+) = 5alpha-androstan-3,17-dione + NADPH + H(+). The enzyme catalyses androsterone + NAD(+) = 5alpha-androstan-3,17-dione + NADH + H(+). With respect to regulation, inhibited by high concentrations of substrate. Functionally, NADP-dependent 17-alpha-hydroxysteroid dehydrogenase that converts 5-alpha-androstane-3,17-dione into androsterone. Has lower 3-alpha-hydroxysteroid dehydrogenase activity. Has broad substrate specificity and acts on various 17-alpha-hydroxysteroids, 17-ketosteroids, 3-alpha hydroxysteroids and 3-ketosteroids. Reduction of keto groups is strictly stereoselective. Reduction of 17-ketosteroids yields only 17-alpha-hydroxysteroids. Likewise, reduction of 3-ketosteroids yields only 3-alpha-hydroxysteroids. The sequence is that of Aldo-keto reductase family 1 member C21 (Akr1c21) from Mus musculus (Mouse).